A 1941-amino-acid chain; its full sequence is MSNFLKPNTLHVDSLSPRHRSLSSGLSSGLSSACSSGSVSPVPIIPIIAISRIRDGDESESESEIELEPARIFHRRMSINNSGNNKRSTNLASIIKEGYLLKHTWSFQRWRRRYFRLKRNHLYYAKDAKCDVFDEIDLSELCYFECSIKNVNHSFQIITPTRSVVLCADSRRDMEDWLGSLKAATAPQRPRGDSILIDQHDILSNHHHWYATSHARPTYCNVCRDALSGVTSHGLSCEVCKCKVHKRCAAKAIANCKWTTLATVGKDIIEQPDGSIIMPHQWMEGNLPVSSICAVCKKTCGSVLRLQDWRCLWCRDTVHVACRPQMAIACPIGPAKLSVVPPTSVHSISTDDAWDVASPKGNFSPLLVFVNSKSGDNQGVKFLRRFKQLLNPAQVFDLISTGPSLGLRLFRHFEMFRILVCSGDGSVGWVLSEIDRFNMHKQCQVAVMPLGTGNDLARVLGWGSSCDDDTHLPQILERYESASTKMLDRWSIMVFEKAISVPKIPKMSITTEQEAVLTGMVTAANQHLRLIVETNDTQTLISSTRNLCDTIDDLVSRIFEHHKDDEQLAVKCDILKQKLTMLLDALQEEEIGAHSGDDLIATIRSLIARSVPSTNSARPSLLNPNISIEKTEKDHINLKERRSSRSLRSSEKEALQCRANSVKRAIYNVVEHSEPGRPKRYQRKLSITPFEALKIPTNSGESTPCSSPLPIIPPINIISPTMETSRLTCISPLPDTRRDSVDENFFNSINLPAPRQFADSRRSSGVPEVIQELEEGANGETIYRIGRLSLSGGANIDDAGNRLSPVSDGGDNSPIDRKLDFLRVPIITSDSIVDPLSDYRPIEVFERTYYMARELDKDKDKERKQDVVLDGEKEEDAGVNEKCEEQTLHPQNTLVHTCNLQVPGIVVTPQSQNVYTSDSITIIDTDQQSNTLQEQSSSEELGCDASDVLSAISNEECSVASEIFDKAETGHTLGDIIQNLDASNFTHIDSPETSDETEAMPGESLMDDISSVLGHDITNALQDNTITDDTTTLCSEHMGPPKPPRKKSMSALSKSQIHPRRRNSSPPRMARLARMDSDDNPQQFGFENIVFEIDNRCDDQKMREPPRYCSLAQFVEGNDIARQSFKQLMLECNSNNNSNNNSNSNSNNNNHNDGNSNDEPETPTNTVITLAHSQLTTTSTSDELDELSTQTAIKIEIHDADSSTMCTTTATTKPLESAMASSTSPTKRSGLGQDISVVVRPPTPLRGDSIKPTPSSSSILSSSLLGVRSLNSSEIRRHSSHAPSLAVREYDKDKDRRHSGFNPNYLALDPEHARFLSSSPAASRRISCGSLFKKNQKYYTKRTYGLFRVRFFVVAEPDIRLATLALIRPLIPLPNEALPNLQTLKGSKSSLFMGSTLFGFEHFSDKEERQGKDKERTPPEETSRKMPIINPIVRLPNWPNLANGTGFISKCLLANADTLCAAVSPLMDPDETLLAGYHEKCVMNNYFGIGIDAKISLDFHNKREEHPEKCRSRARNYMWYGVLGSKQLLQKTCKNLEQRVQLECDGQRIPLPELQGIVILNIPSFMGGTNFWGSSTKKDDIFLPPSFDDRVLEVVAVFGSVQMAASRLINLQHHRIAQCQSVQINILGDEEIPIQVDGEAWLQPPGMIRILHKNRVQMLCRNRSLEVSLKSWQEKQRQHSISIQRDASSTASEHAVSTDDVISERECYVLLNFIEAVSSLVKWVKFLIISHPALQHDLYEVACRASEALESIHPQGKLLEGPSLRTKLVEVIDSSRQLYDDACTLLRDRGHSLILREDLETKLSAALANMEMELKKCSVQKCIDGKLRAYFNVLAPNEESDGRRKSRPFWVRLRSGSTAGQQQFKPPMTNTREAANNWSVNEVVTWLETMQLSEYVDSFLKNDIRGKELLTLGRRDLKDLGVVKVGHVKRILQAIKDLSEN.

A PH domain is found at 93–186; that stretch reads SIIKEGYLLK…WLGSLKAATA (94 aa). Phorbol-ester/DAG-type zinc fingers lie at residues 206–256 and 279–330; these read HHHW…IANC and PHQW…AIAC. In terms of domain architecture, DAGKc spans 361-497; sequence GNFSPLLVFV…DRWSIMVFEK (137 aa). 4 disordered regions span residues 1030-1068, 1132-1164, 1215-1257, and 1276-1295; these read TTTLCSEHMGPPKPPRKKSMSALSKSQIHPRRRNSSPPR, CNSNNNSNNNSNSNSNNNNHNDGNSNDEPETPT, LESA…PSSS, and RRHSSHAPSLAVREYDKDKD. The span at 1133 to 1155 shows a compositional bias: low complexity; it reads NSNNNSNNNSNSNSNNNNHNDGN. The region spanning 1878-1941 is the SAM domain; it reads WSVNEVVTWL…LQAIKDLSEN (64 aa).

This sequence belongs to the eukaryotic diacylglycerol kinase family.

The protein resides in the cytoplasm. It carries out the reaction a 1,2-diacyl-sn-glycerol + ATP = a 1,2-diacyl-sn-glycero-3-phosphate + ADP + H(+). Phosphorylates diacylglycerol (DAG) to generate phosphatidic acid (PA). This is Diacylglycerol kinase eta from Drosophila grimshawi (Hawaiian fruit fly).